The sequence spans 419 residues: MTTQLEQAWELAKQRFAAVGIDVEEALRQLDRLPVSMHCWQGDDVAGFENPEGSLTGGIQSTGNYPGKARNATELRADLEQALRLIPGPKRLNLHAIYLESDTPIARDQIKPEHFKNWVEWAKANRLGLDFNPTCFSHPLSADGFTLSHPDAKIRQFWIDHCKASRRVSAYFGEQLGTPSVMNIWIPDGMKDITVDRLAPRQRLLEALDEVISEKFDPAHHIDAVESKLFGIGAESYTVGSNEFYMGYATSRQTALCLDAGHFHPTEVISDKISAAMLYVPRLLLHVSRPVRWDSDHVVLLDDETQAIASEIVRHNLFDRVHIGLDFFDASINRVAAWVIGTRNMKKALLRALLEPTDQLRQLEASGDYTARLALLEEQKSLPWQAVWEMYCQRHDTPTGSQWLDSVRTYEKEILSKRS.

Residues His-262, Asp-294, and Asp-296 each coordinate Mn(2+).

This sequence belongs to the rhamnose isomerase family. In terms of assembly, homotetramer. It depends on Mn(2+) as a cofactor.

The protein localises to the cytoplasm. It carries out the reaction L-rhamnopyranose = L-rhamnulose. It participates in carbohydrate degradation; L-rhamnose degradation; glycerone phosphate from L-rhamnose: step 1/3. Functionally, catalyzes the interconversion of L-rhamnose and L-rhamnulose. The sequence is that of L-rhamnose isomerase from Salmonella agona (strain SL483).